A 333-amino-acid chain; its full sequence is Cytochrome f (333 aa).

The signal sequence occupies residues Met-1–Ala-44. Positions 45, 66, 69, and 70 each coordinate heme. The chain crosses the membrane as a helical span at residues Val-299–Leu-318.

The protein belongs to the cytochrome f family. In terms of assembly, the 4 large subunits of the cytochrome b6-f complex are cytochrome b6, subunit IV (17 kDa polypeptide, PetD), cytochrome f and the Rieske protein, while the 4 small subunits are PetG, PetL, PetM and PetN. The complex functions as a dimer. Heme is required as a cofactor.

The protein localises to the cellular thylakoid membrane. In terms of biological role, component of the cytochrome b6-f complex, which mediates electron transfer between photosystem II (PSII) and photosystem I (PSI), cyclic electron flow around PSI, and state transitions. This Nostoc sp. (strain PCC 7120 / SAG 25.82 / UTEX 2576) protein is Cytochrome f.